Reading from the N-terminus, the 113-residue chain is Small ribosomal subunit protein uS17 (113 aa).

Belongs to the universal ribosomal protein uS17 family. As to quaternary structure, part of the 30S ribosomal subunit.

Its function is as follows. One of the primary rRNA binding proteins, it binds specifically to the 5'-end of 16S ribosomal RNA. This is Small ribosomal subunit protein uS17 from Sulfurisphaera tokodaii (strain DSM 16993 / JCM 10545 / NBRC 100140 / 7) (Sulfolobus tokodaii).